The chain runs to 310 residues: Cytosolic Fe-S cluster assembly factor Nubp1 homolog (310 aa).

[4Fe-4S] cluster-binding residues include Cys9, Cys23, Cys26, and Cys32. 63–70 (GKGGVGKS) is a binding site for ATP. Residues Cys240 and Cys243 each contribute to the [4Fe-4S] cluster site.

The protein belongs to the Mrp/NBP35 ATP-binding proteins family. NUBP1/NBP35 subfamily. Heterotetramer of 2 Nubp1 and 2 Nubp2 chains. It depends on [4Fe-4S] cluster as a cofactor.

The protein localises to the cytoplasm. Component of the cytosolic iron-sulfur (Fe/S) protein assembly (CIA) machinery. Required for maturation of extramitochondrial Fe-S proteins. The Nubp1-Nubp2 heterotetramer forms a Fe-S scaffold complex, mediating the de novo assembly of an Fe-S cluster and its transfer to target apoproteins. The polypeptide is Cytosolic Fe-S cluster assembly factor Nubp1 homolog (Drosophila virilis (Fruit fly)).